A 129-amino-acid chain; its full sequence is Histone H2A-III (129 aa).

Belongs to the histone H2A family. As to quaternary structure, the nucleosome is a histone octamer containing two molecules each of H2A, H2B, H3 and H4 assembled in one H3-H4 heterotetramer and two H2A-H2B heterodimers. The octamer wraps approximately 147 bp of DNA.

It localises to the nucleus. The protein resides in the chromosome. In terms of biological role, core component of nucleosome. Nucleosomes wrap and compact DNA into chromatin, limiting DNA accessibility to the cellular machineries which require DNA as a template. Histones thereby play a central role in transcription regulation, DNA repair, DNA replication and chromosomal stability. DNA accessibility is regulated via a complex set of post-translational modifications of histones, also called histone code, and nucleosome remodeling. In Volvox carteri (Green alga), this protein is Histone H2A-III.